The following is a 278-amino-acid chain: MGIRKYKPTTPGRRGASVADFVEITREHPEKSLVRPLHSKGGRNVYGRITTRHQGGGHKRAYRLIDFKRADKDGVPAKVAHIEYDPNRTARIALLHYADGEKRYILAPARLAQGDVVESGPGADIKPGNNLPLRNIPVGTVVHAIELRPGGGAKIARSAGASVQLVAKEGMYAQLRMPSGEIRNVDIRCRATVGEVGNAEQSNISWGKAGRMRWKGKRPSVRGVAMNPIDHPLGGGEGKSSGGRHPVSPWGKPEGRTRRKHKPSDKLIVRRRKSNKKR.

Basic residues-rich tracts occupy residues 210 to 220 (GRMRWKGKRPS) and 257 to 278 (TRRK…NKKR). The segment at 210-278 (GRMRWKGKRP…VRRRKSNKKR (69 aa)) is disordered.

Belongs to the universal ribosomal protein uL2 family. In terms of assembly, part of the 50S ribosomal subunit. Forms a bridge to the 30S subunit in the 70S ribosome.

Its function is as follows. One of the primary rRNA binding proteins. Required for association of the 30S and 50S subunits to form the 70S ribosome, for tRNA binding and peptide bond formation. It has been suggested to have peptidyltransferase activity; this is somewhat controversial. Makes several contacts with the 16S rRNA in the 70S ribosome. The sequence is that of Large ribosomal subunit protein uL2 from Acidothermus cellulolyticus (strain ATCC 43068 / DSM 8971 / 11B).